The sequence spans 37 residues: Large ribosomal subunit protein bL36c (37 aa).

Belongs to the bacterial ribosomal protein bL36 family.

It is found in the plastid. It localises to the chloroplast. This chain is Large ribosomal subunit protein bL36c, found in Cryptomeria japonica (Japanese cedar).